We begin with the raw amino-acid sequence, 546 residues long: Chaperonin GroEL (546 aa).

ATP-binding positions include 30–33 (TLGP), Lys51, 87–91 (DGTTT), Gly415, 479–481 (NAA), and Asp495.

Belongs to the chaperonin (HSP60) family. Forms a cylinder of 14 subunits composed of two heptameric rings stacked back-to-back. Interacts with the co-chaperonin GroES.

It localises to the cytoplasm. It catalyses the reaction ATP + H2O + a folded polypeptide = ADP + phosphate + an unfolded polypeptide.. Functionally, together with its co-chaperonin GroES, plays an essential role in assisting protein folding. The GroEL-GroES system forms a nano-cage that allows encapsulation of the non-native substrate proteins and provides a physical environment optimized to promote and accelerate protein folding. This is Chaperonin GroEL from Xanthomonas campestris pv. phaseoli.